We begin with the raw amino-acid sequence, 139 residues long: Non-structural protein 1 (139 aa).

Positions 136 to 139 (DLNS) match the DLNP; interaction with MAP1B motif.

It belongs to the pneumovirus non-structural protein 1 family. In terms of assembly, monomer. Homomultimer. Heteromultimer with NS2. Interacts with the matrix protein M. Interacts with host ELOC and CUL2; this interaction allows NS1 to form an active E3 ligase with ELOC and CUL2. Interacts with host IRF3; this interaction leads to the disrupted association of IRF3 with CREBBP and thus reduced binding of IRF3 to the IFN-beta promoter. Interacts with host MAVS; this interaction prevents MAVS binding to RIGI and inhibits signaling pathway leading to interferon production. Interacts with host MAP1B/microtubule-associated protein 1B. Interacts with host TRIM25 (via SPRY domain); this interaction suppresses RIGI ubiquitination and results in decreased interaction between RIGI and MAVS.

It localises to the host cytoplasm. Its subcellular location is the host mitochondrion. It is found in the host nucleus. In terms of biological role, plays a major role in antagonizing the type I IFN-mediated antiviral response by degrading or inhibiting multiple cellular factors required for either IFN induction or response pathways. Acts cooperatively with NS2 to repress activation and nuclear translocation of host IFN-regulatory factor IRF3. Also disrupts the association of IRF3 with CREBBP. Interacts with host mitochondrial-associated membrane (MAM) MAVS and prevents the interaction with RIGI. Interacts with TRIM25 to suppress TRIM25-mediated RIGI ubiquitination and thereby RIGI-MAVS interaction. Together with NS2, participates in the proteasomal degradation of host STAT2, IRF3, IRF7, TBK1 and RIGI through a NS-degradasome involving CUL2 and Elongin-C. The degradasome requires an intact mitochondrial MAVS. Decreases the levels of host TRAF3 and IKBKE/IKK-epsilon. As functions other than disruptions of the type I IFN-mediated antiviral signaling pathways, induces host SOCS1 and SOCS3 expression. Suppresses premature apoptosis by an NF-kappa-B-dependent, interferon-independent mechanism and thus facilitates virus growth. Additionally, NS1 may serve some inhibitory role in viral transcription and RNA replication. Suppresses proliferation and activation of host CD103+ CD8+ cytotoxic T-lymphocytes and Th17 helper T-lymphocytes. The polypeptide is Non-structural protein 1 (1C) (Human respiratory syncytial virus B (strain 18537)).